We begin with the raw amino-acid sequence, 42 residues long: Mating-type M-specific polypeptide Mi (42 aa).

It is found in the cytoplasm. Its subcellular location is the nucleus. In terms of biological role, mating type proteins are sequence specific DNA-binding proteins that act as master switches in yeast differentiation by controlling gene expression in a cell type-specific fashion. Required for meiosis, but plays no role in conjugation. The protein is Mating-type M-specific polypeptide Mi (mat1-Mi) of Schizosaccharomyces pombe (strain 972 / ATCC 24843) (Fission yeast).